Here is a 334-residue protein sequence, read N- to C-terminus: ADP-L-glycero-D-manno-heptose-6-epimerase (334 aa).

Residues 11–12 (FI), 32–33 (DN), Lys-39, Lys-54, 77–81 (QGACS), and Asn-94 contribute to the NADP(+) site. The active-site Proton acceptor is the Tyr-141. Position 145 (Lys-145) interacts with NADP(+). A substrate-binding site is contributed by Asn-171. The NADP(+) site is built by Val-172 and Lys-180. Residue Lys-180 is the Proton acceptor of the active site. Residues Arg-182, His-189, 203–206 (FGSN), Arg-216, and Tyr-295 each bind substrate.

This sequence belongs to the NAD(P)-dependent epimerase/dehydratase family. HldD subfamily. Homopentamer. It depends on NADP(+) as a cofactor.

The catalysed reaction is ADP-D-glycero-beta-D-manno-heptose = ADP-L-glycero-beta-D-manno-heptose. Its pathway is nucleotide-sugar biosynthesis; ADP-L-glycero-beta-D-manno-heptose biosynthesis; ADP-L-glycero-beta-D-manno-heptose from D-glycero-beta-D-manno-heptose 7-phosphate: step 4/4. Its function is as follows. Catalyzes the interconversion between ADP-D-glycero-beta-D-manno-heptose and ADP-L-glycero-beta-D-manno-heptose via an epimerization at carbon 6 of the heptose. The chain is ADP-L-glycero-D-manno-heptose-6-epimerase from Neisseria meningitidis serogroup C / serotype 2a (strain ATCC 700532 / DSM 15464 / FAM18).